The chain runs to 181 residues: Trypsin inhibitor B (181 aa).

2 disulfide bridges follow: Cys-39–Cys-86 and Cys-136–Cys-145.

The protein belongs to the protease inhibitor I3 (leguminous Kunitz-type inhibitor) family.

In terms of biological role, inhibition of trypsin. The polypeptide is Trypsin inhibitor B (Glycine max (Soybean)).